Consider the following 380-residue polypeptide: F-box/kelch-repeat protein At3g18720 (380 aa).

The F-box domain maps to 47 to 94; sequence LWDKQIPTDLLQEILSRLGLKANIHASLVCKTWLKEAVSVRKFQSRPW. Kelch repeat units lie at residues 190 to 233 and 234 to 279; these read CVIS…INRC and IFSN…LVRQ.

This Arabidopsis thaliana (Mouse-ear cress) protein is F-box/kelch-repeat protein At3g18720.